Consider the following 357-residue polypeptide: Alanine racemase (357 aa).

The active-site Proton acceptor; specific for D-alanine is the K33. N6-(pyridoxal phosphate)lysine is present on K33. Position 129 (R129) interacts with substrate. Y253 (proton acceptor; specific for L-alanine) is an active-site residue. A substrate-binding site is contributed by M301.

This sequence belongs to the alanine racemase family. The cofactor is pyridoxal 5'-phosphate.

It catalyses the reaction L-alanine = D-alanine. It participates in amino-acid biosynthesis; D-alanine biosynthesis; D-alanine from L-alanine: step 1/1. Its function is as follows. Catalyzes the interconversion of L-alanine and D-alanine. May also act on other amino acids. The chain is Alanine racemase (alr) from Pseudomonas fluorescens (strain ATCC BAA-477 / NRRL B-23932 / Pf-5).